The primary structure comprises 240 residues: DNA repair protein RecO (240 aa).

This sequence belongs to the RecO family.

Its function is as follows. Involved in DNA repair and RecF pathway recombination. The sequence is that of DNA repair protein RecO from Actinobacillus pleuropneumoniae serotype 5b (strain L20).